We begin with the raw amino-acid sequence, 351 residues long: L-threonine 3-dehydrogenase (351 aa).

Position 39 (C39) interacts with Zn(2+). Residues T41 and H44 each act as charge relay system in the active site. 6 residues coordinate Zn(2+): H64, E65, C94, C97, C100, and C108. NAD(+) is bound by residues I176, D196, R201, 271 to 273, and 295 to 296; these read LGI and IY.

Belongs to the zinc-containing alcohol dehydrogenase family. In terms of assembly, homotetramer. It depends on Zn(2+) as a cofactor.

It is found in the cytoplasm. It catalyses the reaction L-threonine + NAD(+) = (2S)-2-amino-3-oxobutanoate + NADH + H(+). Its pathway is amino-acid degradation; L-threonine degradation via oxydo-reductase pathway; glycine from L-threonine: step 1/2. Catalyzes the NAD(+)-dependent oxidation of L-threonine to 2-amino-3-ketobutyrate. This chain is L-threonine 3-dehydrogenase, found in Francisella tularensis subsp. holarctica (strain OSU18).